Consider the following 427-residue polypeptide: Serine--tRNA ligase (427 aa).

Position 233–235 (233–235 (TAE)) interacts with L-serine. 264-266 (RSE) contacts ATP. Glutamate 287 contributes to the L-serine binding site. ATP is bound at residue 351 to 354 (EISS). Serine 387 contributes to the L-serine binding site.

Belongs to the class-II aminoacyl-tRNA synthetase family. Type-1 seryl-tRNA synthetase subfamily. In terms of assembly, homodimer. The tRNA molecule binds across the dimer.

The protein resides in the cytoplasm. It catalyses the reaction tRNA(Ser) + L-serine + ATP = L-seryl-tRNA(Ser) + AMP + diphosphate + H(+). It carries out the reaction tRNA(Sec) + L-serine + ATP = L-seryl-tRNA(Sec) + AMP + diphosphate + H(+). Its pathway is aminoacyl-tRNA biosynthesis; selenocysteinyl-tRNA(Sec) biosynthesis; L-seryl-tRNA(Sec) from L-serine and tRNA(Sec): step 1/1. Its function is as follows. Catalyzes the attachment of serine to tRNA(Ser). Is also able to aminoacylate tRNA(Sec) with serine, to form the misacylated tRNA L-seryl-tRNA(Sec), which will be further converted into selenocysteinyl-tRNA(Sec). In Buchnera aphidicola subsp. Schizaphis graminum (strain Sg), this protein is Serine--tRNA ligase.